The chain runs to 143 residues: Transcriptional regulator MraZ (143 aa).

2 consecutive SpoVT-AbrB domains span residues 5–47 (TYTP…PRDE) and 76–119 (TDEQ…DAQA).

This sequence belongs to the MraZ family. Forms oligomers.

The protein resides in the cytoplasm. It is found in the nucleoid. In Mycolicibacterium smegmatis (strain ATCC 700084 / mc(2)155) (Mycobacterium smegmatis), this protein is Transcriptional regulator MraZ.